Reading from the N-terminus, the 91-residue chain is Small ribosomal subunit protein bS16 (91 aa).

The protein belongs to the bacterial ribosomal protein bS16 family.

The polypeptide is Small ribosomal subunit protein bS16 (Enterococcus faecalis (strain ATCC 700802 / V583)).